The primary structure comprises 163 residues: Campylobacter invasion antigen D (163 aa).

The MKD signature appears at 135-145 (KKDDLENRLNL).

As to quaternary structure, interacts with the host cell protein IQGAP1, thus displacing RACGAP1 from the IQGAP1 complex.

The protein localises to the secreted. The protein resides in the host cytoplasm. It is found in the host cytosol. Effector protein required for the development of acute disease and colon inflammatory lesions. Required for maximal host cell invasion and maximal secretion of the inflammatory chemokine interleukin-8 (IL-8) from host cells. Acts by activating the host MAP kinase signaling pathways ERK-1/2 and p38 to promote both cellular invasion and the release of IL-8. CiaD mediated activation of ERK-1/2 leads to the phosphorylation of host cortactin (CTTN) on serine residues and association of cortactin with N-WASP, promoting actin cytoskeleton rearrangement, membrane ruffling and host cell invasion. In addition, maximal host cell invasion requires interaction with the host cell protein IQGAP1, a Ras GTPase-activating-like protein. Binding to IQGAP1 facilitates the activation of the Rho GTPases RAC1 and CDC42, further promoting actin reorganization and bacterial uptake. CiaD promotes RAC1 activation by excluding RACGAP1 from the IQGAP1 complex, preventing the deactivation of RAC1. CiaD probably activates ERK signaling upstream or independently of IQGAP1. In Campylobacter jejuni subsp. jejuni serotype O:2 (strain ATCC 700819 / NCTC 11168), this protein is Campylobacter invasion antigen D.